The following is a 429-amino-acid chain: ATP-dependent RNA helicase RhlB (429 aa).

Positions 9–37 (EKFAQMGLEPEVLAGLESKGFHYCTPIQA) match the Q motif motif. One can recognise a Helicase ATP-binding domain in the interval 40 to 219 (LPLLVEGHDL…YEHMNHPEHV (180 aa)). 53 to 60 (AQTGTGKT) is a binding site for ATP. The DEAD box motif lies at 165–168 (DEAD). The 148-residue stretch at 243 to 390 (KMLLLLSLME…VSKYDREALL (148 aa)) folds into the Helicase C-terminal domain. The interval 395–429 (APKRVVRNRQPVNRNMRDRQGGGNSNNRRRPPRKS) is disordered.

The protein belongs to the DEAD box helicase family. RhlB subfamily. Component of the RNA degradosome, which is a multiprotein complex involved in RNA processing and mRNA degradation.

Its subcellular location is the cytoplasm. The catalysed reaction is ATP + H2O = ADP + phosphate + H(+). Its function is as follows. DEAD-box RNA helicase involved in RNA degradation. Has RNA-dependent ATPase activity and unwinds double-stranded RNA. The sequence is that of ATP-dependent RNA helicase RhlB from Aeromonas salmonicida (strain A449).